Consider the following 74-residue polypeptide: Protein krueppel (74 aa).

C2H2-type zinc fingers lie at residues 1 to 4, 10 to 32, 38 to 60, and 66 to 74; these read ERTH, FECQECHKRFTRDHHLKTHMRLH, YRCEHCDRQFVQVANLRRHLRVH, and YGCEHCSMK.

Belongs to the krueppel C2H2-type zinc-finger protein family.

The protein localises to the nucleus. Functionally, krueppel is a gap class segmentation protein. In Tribolium castaneum (Red flour beetle), this protein is Protein krueppel (Kr).